A 463-amino-acid polypeptide reads, in one-letter code: MSTNQIILTDQGDNYLNVWSHVAQDLYNHYGETLYNSWFSKVNFIESSLNTVILCAPTNFVRDWIKSKYSMVILQLFQHYNNTIKSVEIITKELPGTSKTVIELPTKTFADIGSSELNAENIFSTLDVRFTFDNFVVGVPNELAYAAARAVAESTDAVSESNPLFLYGGVGLGKTHLMHAIGWYIKQNNPNRKVIYMSAEKFMYQFVKALRNKEVISFKEKFRSVDVLMIDDIQFICGKDSTQEEFFHTFNTLIDNNRQIVISCDRSPSDLDNIEDRIKSRLGWGLVADVHSTTYELRLGILESKIEQMNVKIPKNVIDFLASKIVSNVRELEGALNKVIAHSNFTLKEITLENTQNILRDLLRSNERIITVEDIQKKVASRYNIKLSDMSSSRRLREVARPRQIAMYLSKTLTPKSLADIGKKFGKKDHTTVMHAIKKVEELLENDIELREEINLLMKILQN.

The interval 1–83 (MSTNQIILTD…LQLFQHYNNT (83 aa)) is domain I, interacts with DnaA modulators. Positions 83–124 (TIKSVEIITKELPGTSKTVIELPTKTFADIGSSELNAENIFS) are domain II. Positions 125–343 (TLDVRFTFDN…GALNKVIAHS (219 aa)) are domain III, AAA+ region. ATP is bound by residues Gly171, Gly173, Lys174, and Thr175. The domain IV, binds dsDNA stretch occupies residues 344–463 (NFTLKEITLE…INLLMKILQN (120 aa)).

This sequence belongs to the DnaA family. In terms of assembly, oligomerizes as a right-handed, spiral filament on DNA at oriC.

The protein localises to the cytoplasm. In terms of biological role, plays an essential role in the initiation and regulation of chromosomal replication. ATP-DnaA binds to the origin of replication (oriC) to initiate formation of the DNA replication initiation complex once per cell cycle. Binds the DnaA box (a 9 base pair repeat at the origin) and separates the double-stranded (ds)DNA. Forms a right-handed helical filament on oriC DNA; dsDNA binds to the exterior of the filament while single-stranded (ss)DNA is stabiized in the filament's interior. The ATP-DnaA-oriC complex binds and stabilizes one strand of the AT-rich DNA unwinding element (DUE), permitting loading of DNA polymerase. After initiation quickly degrades to an ADP-DnaA complex that is not apt for DNA replication. Binds acidic phospholipids. This chain is Chromosomal replication initiator protein DnaA, found in Rickettsia canadensis (strain McKiel).